The sequence spans 194 residues: Phosphoheptose isomerase (194 aa).

The SIS domain occupies I37–A194. N52–G54 provides a ligand contact to substrate. Residues H61 and E65 each contribute to the Zn(2+) site. Substrate-binding positions include E65, N93–D94, S119–S121, S124, and Q172. Zn(2+)-binding residues include Q172 and H180.

The protein belongs to the SIS family. GmhA subfamily. In terms of assembly, homotetramer. It depends on Zn(2+) as a cofactor.

It localises to the cytoplasm. It catalyses the reaction 2 D-sedoheptulose 7-phosphate = D-glycero-alpha-D-manno-heptose 7-phosphate + D-glycero-beta-D-manno-heptose 7-phosphate. The protein operates within carbohydrate biosynthesis; D-glycero-D-manno-heptose 7-phosphate biosynthesis; D-glycero-alpha-D-manno-heptose 7-phosphate and D-glycero-beta-D-manno-heptose 7-phosphate from sedoheptulose 7-phosphate: step 1/1. In terms of biological role, catalyzes the isomerization of sedoheptulose 7-phosphate in D-glycero-D-manno-heptose 7-phosphate. The chain is Phosphoheptose isomerase from Haemophilus influenzae (strain PittEE).